The primary structure comprises 259 residues: Deoxyribose-phosphate aldolase (259 aa).

Catalysis depends on Asp102, which acts as the Proton donor/acceptor. Catalysis depends on Lys167, which acts as the Schiff-base intermediate with acetaldehyde. Residue Lys201 is the Proton donor/acceptor of the active site.

Belongs to the DeoC/FbaB aldolase family. DeoC type 2 subfamily.

It is found in the cytoplasm. It carries out the reaction 2-deoxy-D-ribose 5-phosphate = D-glyceraldehyde 3-phosphate + acetaldehyde. It participates in carbohydrate degradation; 2-deoxy-D-ribose 1-phosphate degradation; D-glyceraldehyde 3-phosphate and acetaldehyde from 2-deoxy-alpha-D-ribose 1-phosphate: step 2/2. In terms of biological role, catalyzes a reversible aldol reaction between acetaldehyde and D-glyceraldehyde 3-phosphate to generate 2-deoxy-D-ribose 5-phosphate. The protein is Deoxyribose-phosphate aldolase of Shigella boydii serotype 4 (strain Sb227).